A 957-amino-acid polypeptide reads, in one-letter code: Valine--tRNA ligase (957 aa).

Residues 47–57 (PNITGQLHLGH) carry the 'HIGH' region motif. The 'KMSKS' region motif lies at 558–562 (KMSKS). K561 provides a ligand contact to ATP. The stretch at 889 to 918 (FNKENEINRLKKESELINRKIETIQKLLDD) forms a coiled coil.

Belongs to the class-I aminoacyl-tRNA synthetase family. ValS type 1 subfamily. In terms of assembly, monomer.

The protein localises to the cytoplasm. The catalysed reaction is tRNA(Val) + L-valine + ATP = L-valyl-tRNA(Val) + AMP + diphosphate. Functionally, catalyzes the attachment of valine to tRNA(Val). As ValRS can inadvertently accommodate and process structurally similar amino acids such as threonine, to avoid such errors, it has a 'posttransfer' editing activity that hydrolyzes mischarged Thr-tRNA(Val) in a tRNA-dependent manner. This is Valine--tRNA ligase from Blochmanniella pennsylvanica (strain BPEN).